The following is a 21-amino-acid chain: Fibrinogen beta chain (21 aa).

Residue Gln1 is modified to Pyrrolidone carboxylic acid. Tyr6 carries the sulfotyrosine modification.

Heterohexamer; disulfide linked. Contains 2 sets of 3 non-identical chains (alpha, beta and gamma). The 2 heterotrimers are in head to head conformation with the N-termini in a small central domain. Post-translationally, conversion of fibrinogen to fibrin is triggered by thrombin, which cleaves fibrinopeptides A and B from alpha and beta chains, and thus exposes the N-terminal polymerization sites responsible for the formation of the soft clot.

The protein localises to the secreted. In terms of biological role, cleaved by the protease thrombin to yield monomers which, together with fibrinogen alpha (FGA) and fibrinogen gamma (FGG), polymerize to form an insoluble fibrin matrix. Fibrin has a major function in hemostasis as one of the primary components of blood clots. In addition, functions during the early stages of wound repair to stabilize the lesion and guide cell migration during re-epithelialization. Was originally thought to be essential for platelet aggregation, based on in vitro studies using anticoagulated blood. However subsequent studies have shown that it is not absolutely required for thrombus formation in vivo. Enhances expression of SELP in activated platelets. Maternal fibrinogen is essential for successful pregnancy. Fibrin deposition is also associated with infection, where it protects against IFNG-mediated hemorrhage. May also facilitate the antibacterial immune response via both innate and T-cell mediated pathways. The sequence is that of Fibrinogen beta chain (FGB) from Odocoileus hemionus (Mule deer).